Reading from the N-terminus, the 24-residue chain is Coenzyme PQQ synthesis protein A (24 aa).

Residues 16–20 constitute a cross-link (pyrroloquinoline quinone (Glu-Tyr)); that stretch reads EVTMY.

It belongs to the PqqA family.

It participates in cofactor biosynthesis; pyrroloquinoline quinone biosynthesis. In terms of biological role, required for coenzyme pyrroloquinoline quinone (PQQ) biosynthesis. PQQ is probably formed by cross-linking a specific glutamate to a specific tyrosine residue and excising these residues from the peptide. This chain is Coenzyme PQQ synthesis protein A, found in Methylococcus capsulatus (strain ATCC 33009 / NCIMB 11132 / Bath).